We begin with the raw amino-acid sequence, 445 residues long: MSAKWEKKGTNDGELTFEIDLPQIQQGLDQAFQRVRKNLTVPGFRKGKVSRTVFKRMYGDAALYEDALNILLPDAYEAAVKESGIDPVDQPQINVDSMDEGKPWVIKATVTVKPEVTLGQYKGLEVPKQNVEVSAKDIDAELEKRREQQAELVVKDDKAAENGDTVVIDYVGTIDGTEFDGGSSKNYSLELGSNSFIPGFEEQLVGHKSGDEVTVNVTFPEDYKAADLAGKAAEFKTTIHEVKVKELPALDDDFAKDLDDDVDTLDELKAKIKKELTDQREEAAKNAVQEAAIKEATDNATIKEVPNAMIEQEVHNQMDQYLGNMQRQGISPKMYYQLTGTSEDDLHKQFEADAATRVRTNLVLEAIVKAEDIQPTEDQVNEEVKNLASEYNMDEKAVRKALSEDMLKHDIGVKQAIDIITDSAKEVESAKDDADKEASDAKADK.

A PPIase FKBP-type domain is found at 163–248 (GDTVVIDYVG…IHEVKVKELP (86 aa)). A disordered region spans residues 425-445 (KEVESAKDDADKEASDAKADK).

This sequence belongs to the FKBP-type PPIase family. Tig subfamily.

It localises to the cytoplasm. It carries out the reaction [protein]-peptidylproline (omega=180) = [protein]-peptidylproline (omega=0). In terms of biological role, involved in protein export. Acts as a chaperone by maintaining the newly synthesized protein in an open conformation. Functions as a peptidyl-prolyl cis-trans isomerase. The protein is Trigger factor of Lacticaseibacillus casei (strain BL23) (Lactobacillus casei).